Reading from the N-terminus, the 447-residue chain is Tubulin beta chain (447 aa).

Glutamine 11, glutamate 69, serine 138, glycine 142, threonine 143, glycine 144, asparagine 204, and asparagine 226 together coordinate GTP. Glutamate 69 contributes to the Mg(2+) binding site. A disordered region spans residues tyrosine 425 to glutamate 447. Positions glutamate 432–glutamate 447 are enriched in acidic residues.

This sequence belongs to the tubulin family. Dimer of alpha and beta chains. A typical microtubule is a hollow water-filled tube with an outer diameter of 25 nm and an inner diameter of 15 nM. Alpha-beta heterodimers associate head-to-tail to form protofilaments running lengthwise along the microtubule wall with the beta-tubulin subunit facing the microtubule plus end conferring a structural polarity. Microtubules usually have 13 protofilaments but different protofilament numbers can be found in some organisms and specialized cells. It depends on Mg(2+) as a cofactor.

It localises to the cytoplasm. It is found in the cytoskeleton. Tubulin is the major constituent of microtubules, a cylinder consisting of laterally associated linear protofilaments composed of alpha- and beta-tubulin heterodimers. Microtubules grow by the addition of GTP-tubulin dimers to the microtubule end, where a stabilizing cap forms. Below the cap, tubulin dimers are in GDP-bound state, owing to GTPase activity of alpha-tubulin. This chain is Tubulin beta chain (tubA), found in Botryotinia fuckeliana (Noble rot fungus).